Reading from the N-terminus, the 92-residue chain is Large ribosomal subunit protein bL25 (92 aa).

Belongs to the bacterial ribosomal protein bL25 family. Part of the 50S ribosomal subunit; part of the 5S rRNA/L5/L18/L25 subcomplex. Contacts the 5S rRNA. Binds to the 5S rRNA independently of L5 and L18.

Functionally, this is one of the proteins that binds to the 5S RNA in the ribosome where it forms part of the central protuberance. The polypeptide is Large ribosomal subunit protein bL25 (Aliivibrio salmonicida (strain LFI1238) (Vibrio salmonicida (strain LFI1238))).